Consider the following 72-residue polypeptide: Translation initiation factor IF-1 (72 aa).

One can recognise an S1-like domain in the interval 1–72 (MAKQDVIELE…SRGRITYRYK (72 aa)).

This sequence belongs to the IF-1 family. In terms of assembly, component of the 30S ribosomal translation pre-initiation complex which assembles on the 30S ribosome in the order IF-2 and IF-3, IF-1 and N-formylmethionyl-tRNA(fMet); mRNA recruitment can occur at any time during PIC assembly.

Its subcellular location is the cytoplasm. Functionally, one of the essential components for the initiation of protein synthesis. Stabilizes the binding of IF-2 and IF-3 on the 30S subunit to which N-formylmethionyl-tRNA(fMet) subsequently binds. Helps modulate mRNA selection, yielding the 30S pre-initiation complex (PIC). Upon addition of the 50S ribosomal subunit IF-1, IF-2 and IF-3 are released leaving the mature 70S translation initiation complex. This chain is Translation initiation factor IF-1, found in Staphylococcus epidermidis (strain ATCC 35984 / DSM 28319 / BCRC 17069 / CCUG 31568 / BM 3577 / RP62A).